Here is a 194-residue protein sequence, read N- to C-terminus: MGQRVAEVQRKTKETDIKLILNIDGNGDYKISTGIGFFDHMLQLFSHHGKFDIDLEAKGDIYIDDHHTIEDVGIVLGQAFLKALSDKRGIKRYAHVILPMDEALIMVAVDISGRPYLAFDVDFKLPKLGDMTSQMVVEFFKAFVWSSKTTVHIKKLAGENDHHVCEAIFKAIGRTLKEACTIIDDRIPSSKGVL.

The protein belongs to the imidazoleglycerol-phosphate dehydratase family.

It localises to the cytoplasm. It carries out the reaction D-erythro-1-(imidazol-4-yl)glycerol 3-phosphate = 3-(imidazol-4-yl)-2-oxopropyl phosphate + H2O. Its pathway is amino-acid biosynthesis; L-histidine biosynthesis; L-histidine from 5-phospho-alpha-D-ribose 1-diphosphate: step 6/9. This chain is Imidazoleglycerol-phosphate dehydratase, found in Caldicellulosiruptor bescii (strain ATCC BAA-1888 / DSM 6725 / KCTC 15123 / Z-1320) (Anaerocellum thermophilum).